The primary structure comprises 451 residues: tRNA-2-methylthio-N(6)-dimethylallyladenosine synthase (451 aa).

The MTTase N-terminal domain occupies Leu-3–Ile-120. Residues Cys-12, Cys-49, Cys-83, Cys-157, Cys-161, and Cys-164 each contribute to the [4Fe-4S] cluster site. One can recognise a Radical SAM core domain in the interval Gln-143–Lys-375. Residues Gln-378–Ser-441 enclose the TRAM domain.

This sequence belongs to the methylthiotransferase family. MiaB subfamily. In terms of assembly, monomer. The cofactor is [4Fe-4S] cluster.

It is found in the cytoplasm. The enzyme catalyses N(6)-dimethylallyladenosine(37) in tRNA + (sulfur carrier)-SH + AH2 + 2 S-adenosyl-L-methionine = 2-methylsulfanyl-N(6)-dimethylallyladenosine(37) in tRNA + (sulfur carrier)-H + 5'-deoxyadenosine + L-methionine + A + S-adenosyl-L-homocysteine + 2 H(+). Catalyzes the methylthiolation of N6-(dimethylallyl)adenosine (i(6)A), leading to the formation of 2-methylthio-N6-(dimethylallyl)adenosine (ms(2)i(6)A) at position 37 in tRNAs that read codons beginning with uridine. The sequence is that of tRNA-2-methylthio-N(6)-dimethylallyladenosine synthase from Baumannia cicadellinicola subsp. Homalodisca coagulata.